The sequence spans 863 residues: MPSASLLVSTKRLNASKFQKFVSSLNKSTIAGFASVPLRAPPSVAFTRKKVGYSKRYVSSTNGFSATRSTVIQLLNNISTKREVEQYLKYFTSVSQQQFAVIKVGGAIISDNLHELASCLAFLYHVGLYPIVLHGTGPQVNGRLEAQGIEPDYIDGIRITDEHTMAVVRKCFLEQNLKLVTALEQLGVRARPITSGVFTADYLDKDKYKLVGNIKSVTKEPIEASIKAGALPILTSLAETASGQMLNVNADVAAGELARVFEPLKIVYLNEKGGIINGSTGEKISMINLDEEYDDLMKQSWVKYGTKLKIREIKELLDYLPRSSSVAIINVQDLQKELFTDSGAGTMIRRGYKLVKRSSIGEFPSADALRKALQRDAGISSGKESVASYLRYLENSDFVSYADEPLEAVAIVKKDTNVPTLDKFVCSDAAWLNNVTDNVFNVLRRDFPALQWVVSENDANIAWHFDKSQGSYLKGGKVLFWYGIDDINTISELVENFVKSCDTASTLNSSASSGVFANKKSARSYSTRSTPRPEGVNTNPGRVALIGARGYTGKNLVSLINGHPYLEVAHVSSRELKGQKLQDYTKSEIIYESLQIQDIRKLEEQNAVDFWVMALPNKVCEPFVETIQSVHGKSKIIDLSADHRFVSESDWAYGLPELNDRAKIANAAKIANPGCYATGSQLTISPLTKYINGLPTVFGVSGYSGAGTKPSPKNDPKFLNNNLIPYALSDHIHEREISARIGHNVAFMPHVGQWFQGISLTVSIPIKKGSLSIDEIRKLYRNFYEDEKLVHVIDDIPLVKDIEGTHGVVIGGFKLNDAEDRVVVCATIDNLLKGAATQCLQNINLAMGYGEYAGIPENKIIGV.

The N-terminal 65 residues, Met1–Ser65, are a transit peptide targeting the mitochondrion. Residues Lys353–Ser505 form the N-acetyltransferase domain. The residue at position 359 (Ser359) is a Phosphoserine. Residue Cys675 is part of the active site.

The protein in the N-terminal section; belongs to the acetylglutamate kinase family. This sequence in the C-terminal section; belongs to the NAGSA dehydrogenase family. Post-translationally, the protein precursor is cleaved into the two biologically active enzymes, the kinase and the reductase.

Its subcellular location is the mitochondrion. It catalyses the reaction N-acetyl-L-glutamate 5-semialdehyde + phosphate + NADP(+) = N-acetyl-L-glutamyl 5-phosphate + NADPH + H(+). The enzyme catalyses N-acetyl-L-glutamate + ATP = N-acetyl-L-glutamyl 5-phosphate + ADP. It functions in the pathway amino-acid biosynthesis; L-arginine biosynthesis; N(2)-acetyl-L-ornithine from L-glutamate: step 2/4. The protein operates within amino-acid biosynthesis; L-arginine biosynthesis; N(2)-acetyl-L-ornithine from L-glutamate: step 3/4. The kinase activity is inhibited by arginine. This Saccharomyces cerevisiae (strain ATCC 204508 / S288c) (Baker's yeast) protein is Protein ARG5,6, mitochondrial (ARG5,6).